The sequence spans 397 residues: S-layer protein B (397 aa).

The N-terminal stretch at 1 to 24 is a signal peptide; that stretch reads MVVKKTFVLSTLILISVVALVSTA. Positions 259–314 form a coiled coil; sequence INALNNEVSTLRSEISSLNSTIASLNKSLANANTQISNLQSEITTLNSEIGKLNST. Residues 373 to 393 traverse the membrane as a helical segment; that stretch reads GGIIAGIIGLIVAIVAIVLVM.

Belongs to the Sulfolobales SlaB family. In terms of assembly, the mushroom-shaped unit cells of the Sulfolobales' S-layers may consist of three SlaB subunits and six SlaA subunits.

Its subcellular location is the secreted. The protein resides in the cell wall. It localises to the S-layer. The protein localises to the cell membrane. Functionally, S-layer small protein. May anchor the complex to the cell membrane. In Saccharolobus solfataricus (strain ATCC 35092 / DSM 1617 / JCM 11322 / P2) (Sulfolobus solfataricus), this protein is S-layer protein B.